Here is a 572-residue protein sequence, read N- to C-terminus: EF-hand calcium-binding domain-containing protein 12 (572 aa).

Disordered regions lie at residues 62–85 (VPRKEDQTPLNPASQPQAPPKPIP) and 146–169 (EQSAQPNASQATTRTTRKKAPRLS). In terms of domain architecture, EF-hand spans 196 to 231 (SRKIKILEIFHKVGQGENQRITREEFIAAVKAVGVP). Position 212 (Glu212) interacts with Ca(2+).

This is EF-hand calcium-binding domain-containing protein 12 (EFCAB12) from Homo sapiens (Human).